The primary structure comprises 732 residues: Catalase-peroxidase (732 aa).

Positions Met1–Pro29 are disordered. Residues Trp96–Tyr223 constitute a cross-link (tryptophyl-tyrosyl-methioninium (Trp-Tyr) (with M-249)). His97 serves as the catalytic Proton acceptor. The segment at residues Tyr223–Met249 is a cross-link (tryptophyl-tyrosyl-methioninium (Tyr-Met) (with W-96)). A heme b-binding site is contributed by His264.

It belongs to the peroxidase family. Peroxidase/catalase subfamily. Homodimer or homotetramer. It depends on heme b as a cofactor. Post-translationally, formation of the three residue Trp-Tyr-Met cross-link is important for the catalase, but not the peroxidase activity of the enzyme.

The catalysed reaction is H2O2 + AH2 = A + 2 H2O. It carries out the reaction 2 H2O2 = O2 + 2 H2O. Its function is as follows. Bifunctional enzyme with both catalase and broad-spectrum peroxidase activity. The chain is Catalase-peroxidase from Serratia proteamaculans (strain 568).